Consider the following 475-residue polypeptide: MSPQTETKASVGFKAGVKDYKLTYYTPEYETKDTDILAAFRVTPQPGVPPEEAGAAVAAESSTGTWTTVWTDGLTSLDRYKGRCYGIEPVAGEENQYIAYVAYPLDLFEEGSVTNMFTSIVGNVFGFKALRALRLEDLRIPTAYIKTFQGPPHGIQVERDKLNKYGRPLLGCTIKPKLGLSAKNYGRAVYECLRGGLDFTKDDENVNSQPFMRWRDRFLFCAEAIFKSQAETGEIKGHYLNATAGTCEEMMKRAIFARELGAPIVMHDYLTGGFTANTSLAHYCRDNGLLLHIHRAMHAVIDRQKNHGMHFRVLAKALRMSGGDHIHAGTVVGKLEGEREITLGFVDLLRDDFVEKDRSRGIYFTQDWVSLPGVLPVASGGIHVWHMPALTEIFGDDSVLQFGGGTLGHPWGNAPGAVANRVALEACVQARNEGRDLAREGNEIIREASKWSPELAAACEVWKEIKFEFEAMDTL.

The propeptide occupies 1–2; the sequence is MS. Position 3 is an N-acetylproline (P3). K14 is subject to N6,N6,N6-trimethyllysine. The substrate site is built by N123 and T173. Residue K175 is the Proton acceptor of the active site. K177 serves as a coordination point for substrate. Mg(2+)-binding residues include K201, D203, and E204. An N6-carboxylysine modification is found at K201. H294 functions as the Proton acceptor in the catalytic mechanism. Residues R295, H327, and S379 each coordinate substrate.

The protein belongs to the RuBisCO large chain family. Type I subfamily. As to quaternary structure, heterohexadecamer of 8 large chains and 8 small chains; disulfide-linked. The disulfide link is formed within the large subunit homodimers. Requires Mg(2+) as cofactor. Post-translationally, the disulfide bond which can form in the large chain dimeric partners within the hexadecamer appears to be associated with oxidative stress and protein turnover.

Its subcellular location is the plastid. It is found in the chloroplast. The enzyme catalyses 2 (2R)-3-phosphoglycerate + 2 H(+) = D-ribulose 1,5-bisphosphate + CO2 + H2O. The catalysed reaction is D-ribulose 1,5-bisphosphate + O2 = 2-phosphoglycolate + (2R)-3-phosphoglycerate + 2 H(+). Functionally, ruBisCO catalyzes two reactions: the carboxylation of D-ribulose 1,5-bisphosphate, the primary event in carbon dioxide fixation, as well as the oxidative fragmentation of the pentose substrate in the photorespiration process. Both reactions occur simultaneously and in competition at the same active site. In Cucumis sativus (Cucumber), this protein is Ribulose bisphosphate carboxylase large chain (rbcL).